Reading from the N-terminus, the 297-residue chain is Iron-sulfur cluster assembly SufBD family protein ycf24 (297 aa).

The protein belongs to the iron-sulfur cluster assembly SufBD family.

It is found in the plastid. Its subcellular location is the chloroplast. In Antithamnion sp. (Red alga), this protein is Iron-sulfur cluster assembly SufBD family protein ycf24 (ycf24).